The following is a 32-amino-acid chain: Ovostatin (32 aa).

The segment at residues 27-30 is a cross-link (isoglutamyl cysteine thioester (Cys-Gln)); sequence CGEQ.

This sequence belongs to the protease inhibitor I39 (alpha-2-macroglobulin) family. As to quaternary structure, homotetramer, which consists of two pairs of disulfide-linked chains.

It is found in the secreted. Its function is as follows. Is able to inhibit all four classes of proteinases by a unique 'trapping' mechanism. This protein has a peptide stretch, called the 'bait region' which contains specific cleavage sites for different proteinases. When a proteinase cleaves the bait region, a conformational change is induced in the protein which traps the proteinase. The entrapped enzyme remains active against low molecular weight substrates (activity against high molecular weight substrates is greatly reduced). Following cleavage in the bait region a thioester bond is hydrolyzed and mediates the covalent binding of the protein to the proteinase. This chain is Ovostatin, found in Anas platyrhynchos (Mallard).